Reading from the N-terminus, the 96-residue chain is Co-chaperonin GroES (96 aa).

This sequence belongs to the GroES chaperonin family. In terms of assembly, heptamer of 7 subunits arranged in a ring. Interacts with the chaperonin GroEL.

It is found in the cytoplasm. Its function is as follows. Together with the chaperonin GroEL, plays an essential role in assisting protein folding. The GroEL-GroES system forms a nano-cage that allows encapsulation of the non-native substrate proteins and provides a physical environment optimized to promote and accelerate protein folding. GroES binds to the apical surface of the GroEL ring, thereby capping the opening of the GroEL channel. This is Co-chaperonin GroES from Alteromonas mediterranea (strain DSM 17117 / CIP 110805 / LMG 28347 / Deep ecotype).